The following is a 342-amino-acid chain: Methionyl-tRNA formyltransferase (342 aa).

108 to 111 (SLLP) provides a ligand contact to (6S)-5,6,7,8-tetrahydrofolate.

This sequence belongs to the Fmt family.

It catalyses the reaction L-methionyl-tRNA(fMet) + (6R)-10-formyltetrahydrofolate = N-formyl-L-methionyl-tRNA(fMet) + (6S)-5,6,7,8-tetrahydrofolate + H(+). Its function is as follows. Attaches a formyl group to the free amino group of methionyl-tRNA(fMet). The formyl group appears to play a dual role in the initiator identity of N-formylmethionyl-tRNA by promoting its recognition by IF2 and preventing the misappropriation of this tRNA by the elongation apparatus. The sequence is that of Methionyl-tRNA formyltransferase from Prochlorococcus marinus (strain MIT 9313).